A 96-amino-acid polypeptide reads, in one-letter code: Prokineticin Bm8-b (96 aa).

Residues 1-19 form the signal peptide; it reads MKCFAQIVVLLLVIAFSHG. 4 disulfides stabilise this stretch: cysteine 32/cysteine 50, cysteine 37/cysteine 78, cysteine 60/cysteine 86, and cysteine 80/cysteine 95.

Belongs to the AVIT (prokineticin) family. As to expression, expressed by the skin glands.

The protein resides in the secreted. Functionally, potent agonist for both PKR1/PROKR1 and PKR2/PROKR2, and inducer of a potent and long-lasting hyperalgesia. Also potentiates capsaicin-induced TRPV1 current, when tested on DRG neurons. At subnanomolar concentrations, this protein both induces potent chemotaxis of macrophages and stimulates LPS-induced production of the pro-inflammatory cytokines IL-1 and IL-12. In vivo, potently stimulates the contraction of the guinea-pig gastrointestinal (GI) smooth muscle (nanomolar concentration). The protein is Prokineticin Bm8-b of Bombina maxima (Giant fire-bellied toad).